A 394-amino-acid polypeptide reads, in one-letter code: Phosphoglycerate kinase (394 aa).

Substrate contacts are provided by residues 21 to 23 (DLN), Arg36, 60 to 63 (HLGN), Arg114, and Arg147. Residues Lys198, Glu315, and 341–344 (GGET) each bind ATP.

This sequence belongs to the phosphoglycerate kinase family. As to quaternary structure, monomer.

Its subcellular location is the cytoplasm. It catalyses the reaction (2R)-3-phosphoglycerate + ATP = (2R)-3-phospho-glyceroyl phosphate + ADP. The protein operates within carbohydrate degradation; glycolysis; pyruvate from D-glyceraldehyde 3-phosphate: step 2/5. The protein is Phosphoglycerate kinase of Wigglesworthia glossinidia brevipalpis.